The following is a 469-amino-acid chain: MVRLVCSRILKFPKPYLWSATQTTSRCFNSRAQSHNLITKTITSSLQDVLTRPIWQNRSFVQCRRVSSYAQMVNNHQSVTIETFDALCKQVKIREALEVIDILEDKGYIVDFPRLLGLAKLCGEVEALEEARVVHDCITPLDARSYHTVIEMYSGCRSTDDALNVFNEMPKRNSETWGTMIRCLAKNGEGERAIDMFTRFIEEGNKPDKEIFKAVFFACVSIGDINEGLLHFESMYRDYGMVLSMEDYVNVIEMLAACGHLDEALDFVERMTVEPSVEMWETLMNLCWVQGYLELGDRFAELIKKLDASRMSKESNAGLVAAKASDSAMEKLKELRYCQMIRDDPKKRMHEFRAGDTSHLGTVSAFRSLKVQMLDIGFVPATRVCFVTVEEEEKEEQLLFRSNKLAFAHAIINSEARRPLTVLQNMRTCIDGHNTFKMISLITGRALIQRDKKKYHFYKNGVCSCKDYW.

A mitochondrion-targeting transit peptide spans 1–65; sequence MVRLVCSRIL…QNRSFVQCRR (65 aa). PPR repeat units follow at residues 142–172, 173–207, 208–238, and 244–274; these read DARS…MPKR, NSET…GNKP, DKEI…MYRD, and SMED…MTVE. Residues 375 to 469 are type DYW motif; that stretch reads DIGFVPATRV…NGVCSCKDYW (95 aa).

It belongs to the PPR family. PCMP-H subfamily.

The protein resides in the mitochondrion. The polypeptide is Pentatricopeptide repeat-containing protein At2g34370, mitochondrial (PCMP-H25) (Arabidopsis thaliana (Mouse-ear cress)).